We begin with the raw amino-acid sequence, 438 residues long: MYRTHYSSEITEELNGQKVKVAGWVWEVKDLGGIKFLWIRDRDGIVQITAPKKKVDPELFKLIPKLRSEDVVAVEGVVNFTPKAKLGFEILPEKIVVLNRAETPLPLDPTGKVKAELDTRLDNRFMDLRRPEVMAIFKIRSSVFKAVRDFFHENGFIEIHTPKIIATATEGGTELFPMKYFEEDAFLAQSPQLYKQIMMASGLDRVYEIAPIFRAEEHNTTRHLNEAWSIDSEMAFIEDEEEVMSFLERLVAHAINYVREHNAKELDILNFELEEPKLPFPRVSYDKALEILGDLGKEIPWGEDIDTEGERLLGKYMMENENAPLYFLYQYPSEAKPFYIMKYDNKPEICRAFDLEYRGVEISSGGQREHRHDILVEQIKEKGLNPESFEFYLKAFRYGMPPHGGFGLGAERLIKQMLDLPNIREVILFPRDRRRLTP.

E170 is a binding site for L-aspartate. Residues 192–195 (QLYK) form an aspartate region. R214 provides a ligand contact to L-aspartate. ATP contacts are provided by residues 214–216 (RAE), 222–224 (RHL), and E361. Mg(2+) is bound by residues E361 and S364. L-aspartate contacts are provided by S364 and R368. An ATP-binding site is contributed by 409–412 (GAER).

It belongs to the class-II aminoacyl-tRNA synthetase family. Type 2 subfamily. In terms of assembly, homodimer. It depends on Mg(2+) as a cofactor.

It is found in the cytoplasm. The catalysed reaction is tRNA(Asp) + L-aspartate + ATP = L-aspartyl-tRNA(Asp) + AMP + diphosphate. Functionally, catalyzes the attachment of L-aspartate to tRNA(Asp) in a two-step reaction: L-aspartate is first activated by ATP to form Asp-AMP and then transferred to the acceptor end of tRNA(Asp). Is specific for tRNA(Asp) since it aspartylates tRNA(Asn) 3 orders of magnitude less efficiently than tRNA(Asp). The sequence is that of Aspartate--tRNA(Asp) ligase from Thermococcus kodakarensis (strain ATCC BAA-918 / JCM 12380 / KOD1) (Pyrococcus kodakaraensis (strain KOD1)).